A 279-amino-acid polypeptide reads, in one-letter code: Chromatin modification-related protein EAF5 (279 aa).

The segment at Gln147–Pro179 is disordered. A compositionally biased stretch (low complexity) spans Ala154–Thr170.

The protein belongs to the EAF5 family. As to quaternary structure, component of the NuA4 histone acetyltransferase complex composed of at least ACT1, ARP4, YAF9, VID21, SWC4, EAF3, EAF5, EAF6, EAF7, EPL1, ESA1, TRA1 and YNG2.

It localises to the nucleus. Its function is as follows. Component of the NuA4 histone acetyltransferase complex which is involved in transcriptional activation of selected genes principally by acetylation of nucleosomal histone H4 and H2A. The NuA4 complex is also involved in DNA repair. This Saccharomyces cerevisiae (strain ATCC 204508 / S288c) (Baker's yeast) protein is Chromatin modification-related protein EAF5 (EAF5).